We begin with the raw amino-acid sequence, 426 residues long: MQTSLDILTETDPAIAGILQQELQRQRDHLELIASENFTSAAVLAAQGSVLTNKYAEGLPGKRYYGGCEYIDAAEQLAIDRAKELFGAAHVNVQPHSGAQANFAVFLTLLQPGDTFMGMDLSHGGHLTHGSPVNVSGKWFNVVQYGVDPNSEQLNYDTIRELALKHRPKMIVCGYSAYPRIIDFEKFRAIADEIDAYLMADIAHIAGLVASGHHPNPLPFCDVVTTTTHKTLRGPRGGLIMTKDLELGKKFDKSVFPGTQGGPLEHVIAAKAVAFGEALKPDFRDYCGHVVENAQTLAQQLQERGFKIVSNGTDNHLLLVDLRSIGMTGKQADQRVSQVNITANKNTVPFDPESPFVTSGLRLGSPAMTTRGMGTAEFTEIANIIADCLLKPEDAAVTEDCRQRVANLCSRFPLYPHLTSPVPALT.

Residues Leu121 and 125–127 (GHL) each bind (6S)-5,6,7,8-tetrahydrofolate. An N6-(pyridoxal phosphate)lysine modification is found at Lys230. Position 354–356 (354–356 (SPF)) interacts with (6S)-5,6,7,8-tetrahydrofolate.

The protein belongs to the SHMT family. As to quaternary structure, homodimer. Requires pyridoxal 5'-phosphate as cofactor.

It is found in the cytoplasm. The enzyme catalyses (6R)-5,10-methylene-5,6,7,8-tetrahydrofolate + glycine + H2O = (6S)-5,6,7,8-tetrahydrofolate + L-serine. It participates in one-carbon metabolism; tetrahydrofolate interconversion. The protein operates within amino-acid biosynthesis; glycine biosynthesis; glycine from L-serine: step 1/1. In terms of biological role, catalyzes the reversible interconversion of serine and glycine with tetrahydrofolate (THF) serving as the one-carbon carrier. This reaction serves as the major source of one-carbon groups required for the biosynthesis of purines, thymidylate, methionine, and other important biomolecules. Also exhibits THF-independent aldolase activity toward beta-hydroxyamino acids, producing glycine and aldehydes, via a retro-aldol mechanism. In Acaryochloris marina (strain MBIC 11017), this protein is Serine hydroxymethyltransferase.